Here is a 1358-residue protein sequence, read N- to C-terminus: DNA-directed RNA polymerase subunit beta (1358 aa).

It belongs to the RNA polymerase beta chain family. As to quaternary structure, the RNAP catalytic core consists of 2 alpha, 1 beta, 1 beta' and 1 omega subunit. When a sigma factor is associated with the core the holoenzyme is formed, which can initiate transcription.

The enzyme catalyses RNA(n) + a ribonucleoside 5'-triphosphate = RNA(n+1) + diphosphate. Its function is as follows. DNA-dependent RNA polymerase catalyzes the transcription of DNA into RNA using the four ribonucleoside triphosphates as substrates. In Francisella tularensis subsp. mediasiatica (strain FSC147), this protein is DNA-directed RNA polymerase subunit beta.